The sequence spans 236 residues: Thylakoid lumenal 17.4 kDa protein, chloroplastic (236 aa).

2 Pentapeptide repeat domains span residues 124-163 (TNLKGKTLSAALMVGAKFDGADMTEVVMSKAYAVEASFKG) and 169-208 (AVIDRVNFGKSNLKGAVFRNTVLSGSTFEEANLEDVVFED).

As to quaternary structure, interacts in vitro with LTO1.

It localises to the plastid. Its subcellular location is the chloroplast thylakoid lumen. In Arabidopsis thaliana (Mouse-ear cress), this protein is Thylakoid lumenal 17.4 kDa protein, chloroplastic.